A 59-amino-acid chain; its full sequence is Cecropin-C type 2 (59 aa).

Residues 1–23 form the signal peptide; it reads MNFAKVFVLVAMAVLLLVGQSEA.

The protein belongs to the cecropin family.

It localises to the secreted. Functionally, cecropins have lytic and antibacterial activity against several Gram-positive and Gram-negative bacteria. In Aedes albopictus (Asian tiger mosquito), this protein is Cecropin-C type 2 (CECC2).